Consider the following 89-residue polypeptide: Co-chaperonin GroES (89 aa).

The protein belongs to the GroES chaperonin family. Heptamer of 7 subunits arranged in a ring. Interacts with the chaperonin GroEL.

The protein localises to the cytoplasm. In terms of biological role, together with the chaperonin GroEL, plays an essential role in assisting protein folding. The GroEL-GroES system forms a nano-cage that allows encapsulation of the non-native substrate proteins and provides a physical environment optimized to promote and accelerate protein folding. GroES binds to the apical surface of the GroEL ring, thereby capping the opening of the GroEL channel. This Pseudothermotoga lettingae (strain ATCC BAA-301 / DSM 14385 / NBRC 107922 / TMO) (Thermotoga lettingae) protein is Co-chaperonin GroES.